Here is a 323-residue protein sequence, read N- to C-terminus: MEILKSMIDPKIVMAIVISFIVASILGPIIIPLLHKLKFGQNIRQEGPKSHLKKAGTPTIGGLIFIFATIITMFVMVGNPTDEAMIALYSFVGFGFVGFLDDLLKIIKKKNEGLTSGQKMILLLIISGFLTWYAYKYIGTSINIPFLNGQINLGLFYIPAAMFYFAGVTNAVNLTDGLDGLATSVTVLVTTFLGIISYNLGHISLAIFCVALAGALLAFLRFNAFPARVFMGDTGSLALGGAVAMVALILKMPLILVLIGIIYVIETLSVILQVASFKLTGKRIFKMAPIHHHFEQLGWSETKIVSVFSIITVVFCFIAFASL.

9 consecutive transmembrane segments (helical) span residues 12-32 (IVMA…IIIP), 58-78 (PTIG…VMVG), 84-104 (AMIA…DDLL), 120-140 (MILL…YIGT), 151-171 (INLG…VTNA), 177-197 (GLDG…GIIS), 200-220 (LGHI…LAFL), 229-250 (VFMG…ALIL), and 303-323 (KIVS…FASL).

Belongs to the glycosyltransferase 4 family. MraY subfamily. Mg(2+) is required as a cofactor.

It localises to the cell membrane. The catalysed reaction is UDP-N-acetyl-alpha-D-muramoyl-L-alanyl-gamma-D-glutamyl-meso-2,6-diaminopimeloyl-D-alanyl-D-alanine + di-trans,octa-cis-undecaprenyl phosphate = di-trans,octa-cis-undecaprenyl diphospho-N-acetyl-alpha-D-muramoyl-L-alanyl-D-glutamyl-meso-2,6-diaminopimeloyl-D-alanyl-D-alanine + UMP. Its pathway is cell wall biogenesis; peptidoglycan biosynthesis. Its function is as follows. Catalyzes the initial step of the lipid cycle reactions in the biosynthesis of the cell wall peptidoglycan: transfers peptidoglycan precursor phospho-MurNAc-pentapeptide from UDP-MurNAc-pentapeptide onto the lipid carrier undecaprenyl phosphate, yielding undecaprenyl-pyrophosphoryl-MurNAc-pentapeptide, known as lipid I. The polypeptide is Phospho-N-acetylmuramoyl-pentapeptide-transferase (Clostridium perfringens (strain SM101 / Type A)).